A 447-amino-acid chain; its full sequence is Phosphoglucosamine mutase (447 aa).

The Phosphoserine intermediate role is filled by Ser-102. Mg(2+)-binding residues include Ser-102, Asp-241, Asp-243, and Asp-245. Ser-102 is modified (phosphoserine).

The protein belongs to the phosphohexose mutase family. It depends on Mg(2+) as a cofactor. Post-translationally, activated by phosphorylation.

It carries out the reaction alpha-D-glucosamine 1-phosphate = D-glucosamine 6-phosphate. Functionally, catalyzes the conversion of glucosamine-6-phosphate to glucosamine-1-phosphate. The protein is Phosphoglucosamine mutase of Symbiobacterium thermophilum (strain DSM 24528 / JCM 14929 / IAM 14863 / T).